Consider the following 839-residue polypeptide: Autophagy-related protein 9A (839 aa).

Residues 1–20 (MAQFDTEYQRLEASYSDSPP) are disordered. At alanine 2 the chain carries N-acetylalanine. Topologically, residues 2–61 (AQFDTEYQRLEASYSDSPPGEEDLLVHVAEGSKSPWHHIENLDLFFSRVYNLHQKNGFTC) are cytoplasmic. Residues 8 to 11 (YQRL) carry the Tyrosine-based sorting signal motif. Serine 14, serine 16, and serine 18 each carry phosphoserine. The chain crosses the membrane as a helical span at residues 62 to 84 (MLIGEIFELMQFLFVVAFTTFLV). Topologically, residues 85–128 (SCVDYDILFANKMVNHSLHPTEPVKVTLPDAFLPAQVCSARIQE) are lumenal. Residue asparagine 99 is glycosylated (N-linked (GlcNAc...) asparagine). A helical membrane pass occupies residues 129–154 (NGSLITILVIAGVFWIHRLIKFIYNI). The Cytoplasmic portion of the chain corresponds to 155-290 (CCYWEIHSFY…ELAQRLSNRI (136 aa)). Residues 291–301 (LWIGIANFLLC) lie within the membrane without spanning it. Residues 302–319 (PLILIWQILYAFFSYAEV) are Cytoplasmic-facing. Residues 320 to 328 (LKREPGALG) lie within the membrane without spanning it. Topologically, residues 329-371 (ARCWSLYGRCYLRHFNELEHELQSRLNRGYKPASKYMNCFLSP) are cytoplasmic. The chain crosses the membrane as a helical span at residues 372-397 (LLTLLAKNGAFFAGSILAVLIALTIY). Residues 398-406 (DEDVLAVEH) are Lumenal-facing. Residues 407 to 424 (VLTTVTLLGVTVTVCRSF) traverse the membrane as a helical segment. Residues 425–470 (IPDQHMVFCPEQLLRVILAHIHYMPDHWQGNAHRSQTRDEFAQLFQ) are Cytoplasmic-facing. Residues 471 to 480 (YKAVFILEEL) lie within the membrane without spanning it. Residues 481 to 483 (LSP) lie on the Cytoplasmic side of the membrane. The stretch at 484–492 (IVTPLILIF) is an intramembrane region. The Cytoplasmic portion of the chain corresponds to 493 to 839 (CLRPRALEII…DELPPQVHKV (347 aa)). Phosphoserine is present on residues serine 656, serine 735, serine 738, serine 741, and serine 828. Disordered stretches follow at residues 656-686 (SPLQ…SSGS) and 719-839 (QQAQ…VHKV). The segment covering 724-736 (EPERHLWHRRESD) has biased composition (basic and acidic residues). Acidic residues-rich tracts occupy residues 737-747 (ESGESAPDEGG) and 823-832 (VPEEGSEDEL).

This sequence belongs to the ATG9 family. In terms of assembly, homotrimer; forms a homotrimer with a central pore that forms a path between the two membrane leaflets. Interacts (via cytoplasmic its C-terminus) with ATG2A. Interacts with SUPT20H. Interacts (via the tyrosine-based sorting signal motif) with AP4M1; promoting association with the AP-4 complex. Interacts with ARFIP1 and ARFIP2. Interacts with PI4K2A and PI4KB. Interacts with ATG4A; the interaction is direct and promotes ATG9A trafficking. In terms of processing, ufmylated in a DDRGK1 dependent manner.

The protein resides in the preautophagosomal structure membrane. It localises to the cytoplasmic vesicle. Its subcellular location is the autophagosome membrane. The protein localises to the golgi apparatus. It is found in the trans-Golgi network membrane. The protein resides in the late endosome membrane. It localises to the recycling endosome membrane. Its subcellular location is the endoplasmic reticulum membrane. The protein localises to the mitochondrion membrane. It catalyses the reaction a 1,2-diacyl-sn-glycero-3-phosphocholine(in) = a 1,2-diacyl-sn-glycero-3-phosphocholine(out). The catalysed reaction is a 1,2-diacyl-sn-glycero-3-phospho-L-serine(in) = a 1,2-diacyl-sn-glycero-3-phospho-L-serine(out). It carries out the reaction a 1,2-diacyl-sn-glycero-3-phosphoethanolamine(in) = a 1,2-diacyl-sn-glycero-3-phosphoethanolamine(out). Functionally, phospholipid scramblase involved in autophagy by mediating autophagosomal membrane expansion. Cycles between the preautophagosomal structure/phagophore assembly site (PAS) and the cytoplasmic vesicle pool and supplies membrane for the growing autophagosome. Lipid scramblase activity plays a key role in preautophagosomal structure/phagophore assembly by distributing the phospholipids that arrive through ATG2 (ATG2A or ATG2B) from the cytoplasmic to the luminal leaflet of the bilayer, thereby driving autophagosomal membrane expansion. Also required to supply phosphatidylinositol 4-phosphate to the autophagosome initiation site by recruiting the phosphatidylinositol 4-kinase beta (PI4KB) in a process dependent on ARFIP2, but not ARFIP1. In addition to autophagy, also plays a role in necrotic cell death. This Pongo abelii (Sumatran orangutan) protein is Autophagy-related protein 9A.